The following is a 926-amino-acid chain: Disease resistance protein RPM1 (926 aa).

The tract at residues 10–45 (IGRILSVLENETLLLSGVHGEIDKMKKELLIMKSFL) is leucine-zipper. In terms of domain architecture, NB-ARC spans 153-467 (DAKWVNNISE…AQRFVEPIRG (315 aa)). ATP is bound at residue 200–207 (GMGGSGKT). 11 LRR repeats span residues 561-580 (LHSL…LPSL), 581-603 (NLLR…LVTM), 605-625 (NLKY…NFHK), 626-649 (LVNL…MWKL), 686-707 (LQVM…CMTQ), 708-731 (LTRI…LNKI), 756-777 (TASI…WFNT), 778-804 (LQNL…TLPR), 825-836 (FQNLKILEIVQM), 837-859 (KHLT…YVRA), and 876-900 (LQEL…SVDR).

It belongs to the disease resistance NB-LRR family. As to quaternary structure, interacts directly with RIN4 via its N-terminal region. Interacts (via N-terminus) with RIN2 and RIN3 (via C-terminus). Interacts with TIP49A, a protein known to interact with the TATA binding protein complex (TBP). Binds to MORC1/CRT1. Interacts, via its NB-ARC domain, with RIN13.

Its subcellular location is the endomembrane system. The protein localises to the cell membrane. Its function is as follows. Disease resistance (R) protein that specifically recognizes the AvrRpm1 type III effector avirulence protein from Pseudomonas syringae. Resistance proteins guard the plant against pathogens that contain an appropriate avirulence protein via an indirect interaction with this avirulence protein. That triggers a defense system including the hypersensitive response (HR), which restricts the pathogen growth. Acts via its interaction with RIN4, and probably triggers the plant resistance when RIN4 is phosphorylated by AvrRpm1. It is then degraded at the onset of the hypersensitive response. The protein is Disease resistance protein RPM1 of Arabidopsis thaliana (Mouse-ear cress).